The chain runs to 468 residues: 6-phospho-beta-galactosidase 2 (468 aa).

D-galactose 6-phosphate-binding residues include Q19, H116, N159, E160, and N297. The active-site Proton donor is the E160. E375 functions as the Nucleophile in the catalytic mechanism. S428, W429, K435, and Y437 together coordinate D-galactose 6-phosphate.

Belongs to the glycosyl hydrolase 1 family.

The catalysed reaction is a 6-phospho-beta-D-galactoside + H2O = D-galactose 6-phosphate + an alcohol. It participates in carbohydrate metabolism; lactose degradation; D-galactose 6-phosphate and beta-D-glucose from lactose 6-phosphate: step 1/1. In Streptococcus pneumoniae (strain ATCC BAA-255 / R6), this protein is 6-phospho-beta-galactosidase 2.